We begin with the raw amino-acid sequence, 332 residues long: Glycerol-3-phosphate dehydrogenase [NAD(P)+] (332 aa).

NADPH is bound by residues serine 11, tryptophan 12, arginine 32, arginine 33, and lysine 106. Residues lysine 106 and glycine 136 each coordinate sn-glycerol 3-phosphate. An NADPH-binding site is contributed by alanine 140. Positions 191, 244, 254, 255, and 256 each coordinate sn-glycerol 3-phosphate. Lysine 191 functions as the Proton acceptor in the catalytic mechanism. An NADPH-binding site is contributed by arginine 255. NADPH is bound by residues valine 280 and glutamate 282.

It belongs to the NAD-dependent glycerol-3-phosphate dehydrogenase family.

It is found in the cytoplasm. It catalyses the reaction sn-glycerol 3-phosphate + NAD(+) = dihydroxyacetone phosphate + NADH + H(+). The catalysed reaction is sn-glycerol 3-phosphate + NADP(+) = dihydroxyacetone phosphate + NADPH + H(+). The protein operates within membrane lipid metabolism; glycerophospholipid metabolism. Functionally, catalyzes the reduction of the glycolytic intermediate dihydroxyacetone phosphate (DHAP) to sn-glycerol 3-phosphate (G3P), the key precursor for phospholipid synthesis. This Corynebacterium aurimucosum (strain ATCC 700975 / DSM 44827 / CIP 107346 / CN-1) (Corynebacterium nigricans) protein is Glycerol-3-phosphate dehydrogenase [NAD(P)+].